Here is a 355-residue protein sequence, read N- to C-terminus: Peptide chain release factor 1 (355 aa).

Q231 is modified (N5-methylglutamine). Residues 283-292 show a composition bias toward basic and acidic residues; that stretch reads IAKETSERKS. The segment at 283 to 303 is disordered; sequence IAKETSERKSQVGTGDRSGRI.

It belongs to the prokaryotic/mitochondrial release factor family. Post-translationally, methylated by PrmC. Methylation increases the termination efficiency of RF1.

The protein localises to the cytoplasm. Functionally, peptide chain release factor 1 directs the termination of translation in response to the peptide chain termination codons UAG and UAA. This chain is Peptide chain release factor 1, found in Campylobacter curvus (strain 525.92).